Here is a 565-residue protein sequence, read N- to C-terminus: Oxygen-dependent choline dehydrogenase (565 aa).

Aspartate 6–glutamate 35 provides a ligand contact to FAD. The interval glutamine 182–alanine 203 is disordered. The active-site Proton acceptor is histidine 475.

This sequence belongs to the GMC oxidoreductase family. FAD serves as cofactor.

The enzyme catalyses choline + A = betaine aldehyde + AH2. It catalyses the reaction betaine aldehyde + NAD(+) + H2O = glycine betaine + NADH + 2 H(+). Its pathway is amine and polyamine biosynthesis; betaine biosynthesis via choline pathway; betaine aldehyde from choline (cytochrome c reductase route): step 1/1. Its function is as follows. Involved in the biosynthesis of the osmoprotectant glycine betaine. Catalyzes the oxidation of choline to betaine aldehyde and betaine aldehyde to glycine betaine at the same rate. This Pseudomonas entomophila (strain L48) protein is Oxygen-dependent choline dehydrogenase.